Consider the following 852-residue polypeptide: Cytochrome P450 monooxygenase mpaDE (852 aa).

Residues 1 to 6 (MDYLII) are Lumenal-facing. A helical membrane pass occupies residues 7-29 (IRITAVAVVLYLTRYVCCLYLHL). Topologically, residues 30–852 (QDVPGPLFAK…DLEDAMEGTK (823 aa)) are cytoplasmic. C448 is a heme binding site.

It belongs to the cytochrome P450 family. It depends on heme as a cofactor.

The protein localises to the endoplasmic reticulum membrane. The enzyme catalyses 5-methylorsellinate + reduced [NADPH--hemoprotein reductase] + O2 = 4,6-dihydroxy-2-(hydroxymethyl)-3-methylbenzoate + oxidized [NADPH--hemoprotein reductase] + H2O + H(+). It catalyses the reaction 4,6-dihydroxy-2-(hydroxymethyl)-3-methylbenzoate + H(+) = 5,7-dihydroxy-4-methylphthalide + H2O. It participates in secondary metabolite biosynthesis; terpenoid biosynthesis. Its function is as follows. Cytochrome P450 monooxygenase; part of the gene cluster that mediates the biosynthesis of mycophenolic acid (MPA), the first isolated antibiotic natural product in the world obtained from a culture of Penicillium brevicompactum in 1893. MpaDE is an endoplasmic reticulum-bound enzyme that catalyzes the conversion of 5-methylorsellinic acid (5MOA) into the phthalide compound 5,7-dihydroxy-4,6-dimethylphthalide (DHMP). MpaDE first catalyzes hydroxylation of 5-MOA to 4,6-dihydroxy-2-(hydroxymethyl)-3-methylbenzoic acid (DHMB), and then acts as a lactone synthase that catalyzes the ring closure to convert DHMB into DHMP. The first step of the pathway is the synthesis of 5-methylorsellinic acid (5MOA) by the cytosolic polyketide synthase mpaC. 5MOA is then converted to the phthalide compound 5,7-dihydroxy-4,6-dimethylphthalide (DHMP) by the endoplasmic reticulum-bound cytochrome P450 monooxygenase mpaDE. MpaDE first catalyzes hydroxylation of 5-MOA to 4,6-dihydroxy-2-(hydroxymethyl)-3-methylbenzoic acid (DHMB). MpaDE then acts as a lactone synthase that catalyzes the ring closure to convert DHMB into DHMP. The next step is the prenylation of DHMP by the Golgi apparatus-associated prenyltransferase mpaA to yield farnesyl-DHMP (FDHMP). The ER-bound oxygenase mpaB then mediates the oxidative cleavage the C19-C20 double bond in FDHMP to yield FDHMP-3C via a mycophenolic aldehyde intermediate. The O-methyltransferase mpaG catalyzes the methylation of FDHMP-3C to yield MFDHMP-3C. After the cytosolic methylation of FDHMP-3C, MFDHMP-3C enters into peroxisomes probably via free diffusion due to its low molecular weight. Upon a peroxisomal CoA ligation reaction, catalyzed by a beta-oxidation component enzyme acyl-CoA ligase ACL891, MFDHMP-3C-CoA would then be restricted to peroxisomes for the following beta-oxidation pathway steps. The peroxisomal beta-oxidation machinery than converts MFDHMP-3C-CoA into MPA_CoA, via a beta-oxidation chain-shortening process. Finally mpaH acts as a peroxisomal acyl-CoA hydrolase with high substrate specificity toward MPA-CoA to release the final product MPA. The protein is Cytochrome P450 monooxygenase mpaDE of Penicillium roqueforti (strain FM164).